Consider the following 1153-residue polypeptide: Bifunctional dioxygenase (DOX)-epoxy alcohol synthase (EAS) (1153 aa).

A compositionally biased stretch (low complexity) spans 46-56 (SSKESPSRKSS). The tract at residues 46–113 (SSKESPSRKS…TQHGDGTYPT (68 aa)) is disordered. Residues 57–74 (TIGQSTRNGSCQADTQKG) are compositionally biased toward polar residues. Residues 81-98 (EKPKPVKENPMKKLKEMS) show a composition bias toward basic and acidic residues. Residues 177–525 (TDSLINELWE…DGKFDDDDLV (349 aa)) are fatty acid alpha-dioxygenase. His276 contributes to the heme b binding site. Residue Tyr454 is part of the active site. Residue His457 participates in heme b binding. An epoxy alcohol synthase region spans residues 732 to 1153 (RVNITSYGGA…VTMRVMWDDE (422 aa)). Position 1086 (Cys1086) interacts with heme.

It in the N-terminal section; belongs to the peroxidase family. This sequence in the C-terminal section; belongs to the cytochrome P450 family. In terms of assembly, homotetramer. Heme b is required as a cofactor. Heme serves as cofactor.

The catalysed reaction is (9Z)-octadecenoate + O2 = (8R)-hydroperoxy-(9Z)-octadecenoate. It catalyses the reaction (9Z)-octadecenoate + O2 = 10-hydroperoxy-(8E)-octadecenoate. It carries out the reaction (9Z,12Z)-octadecadienoate + O2 = (8E,10R,12Z)-10-hydroperoxyoctadeca-8,12-dienoate. The enzyme catalyses (9Z,12Z,15Z)-octadecatrienoate + O2 = (10R)-hydroperoxy-(8E,12Z,15Z)-octadecatrienoate. The catalysed reaction is (9Z,12Z,15Z)-octadecatrienoate + O2 = (8R)-hydroperoxy-(9Z,12Z,15Z)-octadecatrienoate. It catalyses the reaction (11Z,14Z)-eicosadienoate + O2 = 12-hydroperoxy-(10E,14Z)-eicosadienoate. It carries out the reaction (11Z,14Z,17Z)-eicosatrienoate + O2 = 12-hydroperoxy-(10E,14Z,17Z)-eicosatrienoate. The enzyme catalyses (12R,13S)-epoxy-(9Z)-octadecenoate + O2 = (12R,13S)-epoxy-(10R)-hydroperoxy-(8E)-octadecenoate. The catalysed reaction is (8E,10R,12Z)-10-hydroperoxyoctadeca-8,12-dienoate = (12S,13R)-epoxy-(10R)-hydroxy-(8E)-octadecenoate. It catalyses the reaction (10R)-hydroperoxy-(8E,12Z,15Z)-octadecatrienoate = 12,13-epoxy-(10R)-hydroxy-(8E,15Z)-octadecadienoate. It carries out the reaction 12-hydroperoxy-(10E,14Z)-eicosadienoate = 10,11-epoxy-12-hydroxy-(14Z)-eicosenoate. The enzyme catalyses 12-hydroperoxy-(10E,14Z,17Z)-eicosatrienoate = 14,15-epoxy-12-hydroxy-(10E,17Z)-eicosadienoate. The catalysed reaction is (13R)-hydroperoxy-(9Z,11E)-octadecadienoate = (12R,13R)-epoxy-(11S)-hydroxy-(9Z)-octadecenoate. It catalyses the reaction (13S)-hydroperoxy-(9Z,11E)-octadecadienoate = (12R,13R)-epoxy-(11S)-hydroxy-(9Z)-octadecenoate. It carries out the reaction 12-hydroperoxy-(10E,14Z)-eicosadienoate = 14,15-epoxy-12-hydroxy-(10E)-eicosenoate. The enzyme catalyses 12-hydroperoxy-(10E,14Z,17Z)-eicosatrienoate = 10,11-epoxy-12-hydroxy-(14Z,17Z)-eicosadienoate. Bifunctional dioxygenase (DOX)-epoxy alcohol synthase (EAS) that converts linoleic acid (18:2n-6) sequentially to 10(R)-hydroperoxy-8(E),12(Z)-octadecadienoic acid (10R-HPODE) and 10R-HPODE further to 12 S(13R)-epoxy-10(R)-hydroxy-8(E)-octadecenoic acid as the end product. Oxygenation at C-10 occurs by retention of the pro-R hydrogen of C-8 of 18:2n-6, suggesting antarafacial hydrogen abstraction and oxygenation. The epoxy alcohol is formed from 10R-HPODE, likely by heterolytic cleavage of the dioxygen bond and subsequent intramolecular epoxidation of the 12(Z) double bond. The DOX domain is also able to oxygenate position C-8 of linoleic acid to produce 8(R)-hydroperoxy-8(E),12(Z)-octadecadienoic acid (8R-HPODE). Moreover, the DOX domain can oxygenate alpha-linolenic acid (18:3n-3) at C-8 or C-10 to produce respectively 8HOTrE and 10HOTrE, oleic acid (18:1n-9) at C-8 or C-10 to produce respectively 8-H(P)OME and 10-H(P)OME (with 8R stereoisomer to over 95%), eicosadienoic acid (20:2n-6) at C-10 or C-12 to produce respectively 10(11)-epoxy-12-hydroxy-14(Z)-eicosenoic acid and 14(15)-epoxy-12-hydroxy-10(E)-eicosenoic acid, as well as eicosatrienoic acid (20:3n-3) at C-10 or C-12 to produce respectively 10(11)-epoxy-12-hydroxy-14(Z),17(Z)-eicosadienoic acid and 14(15)-epoxy-12-hydroxy-14(Z),17(Z)-eicosadienoic acid. On the other side, the enzyme EAS domain can also catalyze the conversion of 10HOTrE into 12(13)-epoxy-10(R)-hydroxy-8(E),15(Z)-octadecadienoic acid, 13-R-HPODE into the stereoisomers of 12(13)-epoxy-11-hydroxy-9(Z)-octadecenoic acids (erythro/threo, 1:4), as well as 13S-HPODE into the stereoisomers of 12(13)-epoxy-11-hydroxy-9(Z)-octadecenoic acids (erythro/threo, 1:4) (EAS activity). Gamma-linolenic acid (18:3n-6) is not a substrate. The protein is Bifunctional dioxygenase (DOX)-epoxy alcohol synthase (EAS) of Pyricularia oryzae (strain 70-15 / ATCC MYA-4617 / FGSC 8958) (Rice blast fungus).